The following is a 71-amino-acid chain: MPIIKVRDNEPFDVALRRFKRSCEKAGILADVRAREFYEKPTTARKRAKAAAIKRLAKKLSRENARRVRLY.

The protein belongs to the bacterial ribosomal protein bS21 family.

This is Small ribosomal subunit protein bS21 from Shewanella sediminis (strain HAW-EB3).